The sequence spans 407 residues: uncharacterized protein (407 aa).

Disordered stretches follow at residues 1–62 and 350–379; these read MTGR…NGDP and SVTP…KPSS. The span at 17 to 30 shows a compositional bias: basic and acidic residues; it reads PVEKMPRFQREHGA.

This is an uncharacterized protein from Ictaluridae (bullhead catfishes).